A 299-amino-acid chain; its full sequence is tRNA dimethylallyltransferase (299 aa).

Residue 11-18 (GPTAVGKT) coordinates ATP. Residue 13 to 18 (TAVGKT) coordinates substrate. The tract at residues 36–39 (DSQQ) is interaction with substrate tRNA.

The protein belongs to the IPP transferase family. Monomer. The cofactor is Mg(2+).

It catalyses the reaction adenosine(37) in tRNA + dimethylallyl diphosphate = N(6)-dimethylallyladenosine(37) in tRNA + diphosphate. In terms of biological role, catalyzes the transfer of a dimethylallyl group onto the adenine at position 37 in tRNAs that read codons beginning with uridine, leading to the formation of N6-(dimethylallyl)adenosine (i(6)A). This is tRNA dimethylallyltransferase from Streptococcus pyogenes serotype M28 (strain MGAS6180).